A 447-amino-acid polypeptide reads, in one-letter code: UDP-glucosyl transferase 79T1 (447 aa).

The active-site Proton acceptor is the His-18. Asp-116 acts as the Charge relay in catalysis. Residues Ser-265, Trp-323, Val-324, His-341, Thr-346, and Glu-349 each coordinate UDP.

Belongs to the UDP-glycosyltransferase family. Mainly expressed in flowers, flower buds and young leaves, and, to a lesser extent, in old leaves, stems and roots.

Its pathway is secondary metabolite biosynthesis; terpenoid biosynthesis. In terms of biological role, component of the oleanane-type triterpene saponins (e.g. saponarioside A and saponarioside B) biosynthetic pathway, leading to the production of natural products with detergent properties used as traditional sources of soap. A glycosyltransferase that mediates the conversion of QA-triF to QA-triFR via the elongation of the C-28 sugar chain with a deoxyhexose on the D-fucose moiety. In Saponaria officinalis (Common soapwort), this protein is UDP-glucosyl transferase 79T1.